The following is a 471-amino-acid chain: Pancreatic lipase-related protein 2 (471 aa).

The signal sequence occupies residues 1 to 17 (MLPSWTIGLLLLATVRG). Residues cysteine 21 and cysteine 27 are joined by a disulfide bond. Asparagine 71 is a glycosylation site (N-linked (GlcNAc...) asparagine). A required for galactolipase activity region spans residues 93 to 105 (IHGFIDKGEDSWP). Cysteine 109 and cysteine 120 are joined by a disulfide. Serine 171 functions as the Nucleophile in the catalytic mechanism. The Charge relay system role is filled by aspartate 195. Residues glutamate 206, arginine 209, aspartate 211, and aspartate 214 each coordinate Ca(2+). Cysteines 256 and 280 form a disulfide. The segment at 257-279 (QKNTLSTIVDVDGIWEGIEDFAA) is required for galactolipase activity. The Charge relay system role is filled by histidine 282. Cystine bridges form between cysteine 304-cysteine 317 and cysteine 320-cysteine 325. N-linked (GlcNAc...) asparagine glycosylation is present at asparagine 355. The 113-residue stretch at 359-471 (WRYRVSVTLA…ENILQTLNPC (113 aa)) folds into the PLAT domain. A disulfide bridge links cysteine 455 with cysteine 471.

Belongs to the AB hydrolase superfamily. Lipase family.

The protein localises to the secreted. It localises to the zymogen granule membrane. Its subcellular location is the cell projection. It is found in the neuron projection. It carries out the reaction a triacylglycerol + H2O = a diacylglycerol + a fatty acid + H(+). The catalysed reaction is a 1,2-diacyl-3-O-(beta-D-galactosyl)-sn-glycerol + 2 H2O = 3-beta-D-galactosyl-sn-glycerol + 2 a fatty acid + 2 H(+). It catalyses the reaction 1,2,3-tri-(9Z-octadecenoyl)-glycerol + H2O = di-(9Z)-octadecenoylglycerol + (9Z)-octadecenoate + H(+). The enzyme catalyses di-(9Z)-octadecenoylglycerol + H2O = (9Z-octadecenoyl)-glycerol + (9Z)-octadecenoate + H(+). It carries out the reaction (9Z-octadecenoyl)-glycerol + H2O = glycerol + (9Z)-octadecenoate + H(+). The catalysed reaction is 1-(9Z-octadecenoyl)-glycerol + H2O = glycerol + (9Z)-octadecenoate + H(+). It catalyses the reaction 1,2,3-tripropanoylglycerol + H2O = dipropanoylglycerol + propanoate + H(+). The enzyme catalyses 1,2,3-tributanoylglycerol + H2O = dibutanoylglycerol + butanoate + H(+). It carries out the reaction 1,2,3-trioctanoylglycerol + H2O = dioctanoylglycerol + octanoate + H(+). The catalysed reaction is 1,2-didecanoylglycerol + H2O = decanoylglycerol + decanoate + H(+). It catalyses the reaction long chain 1,2-diacyl-3-O-beta-D-galactosyl-sn-glycerol + H2O = long chain acyl-3-O-beta-D-galactosyl-sn-glycerol + a fatty acid + H(+). The enzyme catalyses 1,2-dioctanoyl-3-O-beta-D-galactosyl-sn-glycerol + H2O = octanoyl-3-(beta-D-galactosyl)-sn-glycerol + octanoate + H(+). It carries out the reaction 1,2-didodecanoyl-3-beta-D-galactosyl-sn-glycerol + H2O = dodecanoyl-3-beta-D-galactosyl-sn-glycerol + dodecanoate + H(+). The catalysed reaction is 1-beta-D-galactosyl-2,3-didodecanoyl-sn-glycerol + H2O = 1-beta-D-galactosyl-dodecanoyl-sn-glycerol + dodecanoate + H(+). It catalyses the reaction a 1,2-diacyl-3-O-[alpha-D-galactosyl-(1-&gt;6)-beta-D-galactosyl]-sn-glycerol + H2O = acyl-3-O-[alpha-D-galactosyl-(1-&gt;6)-beta-D-galactosyl]-sn-glycerol + a fatty acid + H(+). The enzyme catalyses long chain 1,2-diacyl-3-O-[alpha-D-galactosyl-(1-&gt;6)-beta-D-galactosyl]-sn-glycerol + H2O = long chain acyl-3-O-[alpha-D-galactosyl-(1-&gt;6)-beta-D-galactosyl]-sn-glycerol + a fatty acid + H(+). It carries out the reaction 1,2-dioctanoyl-3-O-[alpha-D-galactosyl-(1-&gt;6)-beta-D-galactosyl]-sn-glycerol + H2O = octanoyl-3-O-[alpha-D-galactosyl-(1-&gt;6)-beta-D-galactosyl]-sn-glycerol + octanoate + H(+). The catalysed reaction is 1,2-didodecanoyl-3-O-[alpha-D-galactosyl-(1-&gt;6)-beta-D-galactosyl]-sn-glycerol + H2O = dodecanoyl-3-O-[alpha-D-galactosyl-(1-&gt;6)-beta-D-galactosyl]-sn-glycerol + dodecanoate + H(+). It catalyses the reaction a 1,2-diacyl-sn-glycero-3-phosphocholine + H2O = a monoacyl-sn-glycero-3-phosphocholine + a fatty acid + H(+). It functions in the pathway glycerolipid metabolism; triacylglycerol degradation. It participates in glycolipid metabolism. Up-regulated by CLPS in the presence of increasing concentrations of bile salts. Lipase that primarily hydrolyzes triglycerides and galactosylglycerides. In neonates, may play a major role in pancreatic digestion of dietary fats such as milk fat globules enriched in long-chain triglycerides. Hydrolyzes short-, medium- and long-chain fatty acyls in triglycerides without apparent positional specificity. Can completely deacylate triacylglycerols. When the liver matures and bile salt synthesis increases, likely functions mainly as a galactolipase and monoacylglycerol lipase. Hydrolyzes monogalactosyldiglycerols (MGDG) and digalactosyldiacylglycerols (DGDG) present in a plant-based diet, releasing long-chain polyunsaturated fatty acids. Hydrolyzes medium- and long-chain fatty acyls in galactolipids. May act together with LIPF to hydrolyze partially digested triglycerides. Hydrolyzes long-chain monoglycerides with high efficiency. In cytotoxic T cells, contributes to perforin-dependent cell lysis, but is unlikely to mediate direct cytotoxicity. Also has low phospholipase activity. In neurons, required for the localization of the phospholipid 1-oleoyl-2-palmitoyl-PC (OPPC) to neurite tips through acyl chain remodeling of membrane phospholipids. The resulting OPPC-rich lipid membrane domain recruits the t-SNARE protein STX4 by selectively interacting with the STX4 transmembrane domain and this promotes surface expression of the dopamine transporter SLC6A3/DAT at neurite tips by facilitating fusion of SLC6A3-containing transport vesicles with the plasma membrane. This is Pancreatic lipase-related protein 2 (PNLIPRP2) from Sus scrofa (Pig).